Here is a 1051-residue protein sequence, read N- to C-terminus: Protein ALWAYS EARLY 2 (1051 aa).

Basic residues-rich tracts occupy residues 1–11 (MAPVRKSRSVN) and 27–36 (SKKNKLRKKL). The segment at 1-37 (MAPVRKSRSVNKRFTNETSPRKDAGKSKKNKLRKKLS) is disordered. Residues 39–93 (KLGPQWTRLELERFYDAYRKHGQEWRRVAAAIRNSRSVDMVEALFNMNRAYLSLP) enclose the SANT domain. Disordered stretches follow at residues 114–158 (EGSG…IGSP), 170–210 (ANGT…RKQF), 225–293 (TDAS…KDTT), 323–375 (AECN…TSGA), 397–605 (SELS…SSRS), and 948–981 (SIEHHHNPSPSNGSEPVANNDLNSQDGSEKNAQM). Residues 120 to 130 (GEGHDASEVPR) show a composition bias toward basic and acidic residues. Over residues 131 to 140 (KQQKRKRAKP) the composition is skewed to basic residues. A compositionally biased stretch (basic and acidic residues) spans 279–293 (ESSRERKLDSDKDTT). Residues 323–332 (AECNDSDDNG) are compositionally biased toward acidic residues. Composition is skewed to basic and acidic residues over residues 350–372 (AAIEASREKYSPRSPKKRDDKHT) and 403–417 (LKEERTEYDMDEKSS). Positions 560–574 (KQVSDSGPTSLSQKP) are enriched in polar residues. Over residues 586 to 597 (LQEKAKSSETTH) the composition is skewed to basic and acidic residues. The span at 967-981 (NDLNSQDGSEKNAQM) shows a compositional bias: polar residues.

As to quaternary structure, interacts with SNL1 (via PAH3). In terms of tissue distribution, expressed ubiquitously in vegetative and reproductive tissues.

It localises to the nucleus. The protein is Protein ALWAYS EARLY 2 (ALY2) of Arabidopsis thaliana (Mouse-ear cress).